A 474-amino-acid polypeptide reads, in one-letter code: Replication-associated protein (474 aa).

Residues 248–255 (GKRFQEDR) carry the Nuclear localization signal motif. Residues 455-474 (AFAPGFSLTSEPEPKRRRFF) form a disordered region.

It localises to the host nucleus. Functionally, plays an essential for the replication of viral DNA. Presumably cleaves viral genomic dsRNA replicative form to initiate rolling circle replication. This Avon-Heathcote Estuary associated kieseladnavirus (AHEaBV) protein is Replication-associated protein.